Here is a 344-residue protein sequence, read N- to C-terminus: Phenylalanine--tRNA ligase alpha subunit (344 aa).

E256 contributes to the Mg(2+) binding site.

Belongs to the class-II aminoacyl-tRNA synthetase family. Phe-tRNA synthetase alpha subunit type 1 subfamily. In terms of assembly, tetramer of two alpha and two beta subunits. Mg(2+) is required as a cofactor.

The protein localises to the cytoplasm. It catalyses the reaction tRNA(Phe) + L-phenylalanine + ATP = L-phenylalanyl-tRNA(Phe) + AMP + diphosphate + H(+). The protein is Phenylalanine--tRNA ligase alpha subunit of Bacillus anthracis (strain CDC 684 / NRRL 3495).